The chain runs to 833 residues: Leucine--tRNA ligase (833 aa).

The 'HIGH' region motif lies at 41 to 52 (PYPSGAGLHVGH). Positions 610–614 (KMSKS) match the 'KMSKS' region motif. Position 613 (K613) interacts with ATP.

The protein belongs to the class-I aminoacyl-tRNA synthetase family.

The protein resides in the cytoplasm. The catalysed reaction is tRNA(Leu) + L-leucine + ATP = L-leucyl-tRNA(Leu) + AMP + diphosphate. The protein is Leucine--tRNA ligase of Streptococcus thermophilus (strain CNRZ 1066).